The primary structure comprises 193 residues: BH3-interacting domain death agonist (193 aa).

The BH3 motif lies at 87–101 (IAAQLAEIGDQLDKQ).

In terms of assembly, forms heterodimers either with the pro-apoptotic protein BAX or the anti-apoptotic protein Bcl-2.

It localises to the cytoplasm. It is found in the mitochondrion outer membrane. In terms of biological role, induces caspases and apoptosis. Counters the protective effect of Bcl-2. The sequence is that of BH3-interacting domain death agonist (BID) from Gallus gallus (Chicken).